A 124-amino-acid polypeptide reads, in one-letter code: Small ribosomal subunit protein uS12 (124 aa).

Aspartate 89 carries the 3-methylthioaspartic acid modification.

It belongs to the universal ribosomal protein uS12 family. As to quaternary structure, part of the 30S ribosomal subunit. Contacts proteins S8 and S17. May interact with IF1 in the 30S initiation complex.

In terms of biological role, with S4 and S5 plays an important role in translational accuracy. Its function is as follows. Interacts with and stabilizes bases of the 16S rRNA that are involved in tRNA selection in the A site and with the mRNA backbone. Located at the interface of the 30S and 50S subunits, it traverses the body of the 30S subunit contacting proteins on the other side and probably holding the rRNA structure together. The combined cluster of proteins S8, S12 and S17 appears to hold together the shoulder and platform of the 30S subunit. This Campylobacter hominis (strain ATCC BAA-381 / DSM 21671 / CCUG 45161 / LMG 19568 / NCTC 13146 / CH001A) protein is Small ribosomal subunit protein uS12.